The chain runs to 279 residues: DegV domain-containing protein SpyM3_1149 (279 aa).

Residues 4 to 278 (IKIVTDSSIT…EGAFAVMVRY (275 aa)) enclose the DegV domain. Residues Thr-62 and Ser-95 each contribute to the hexadecanoate site.

In terms of biological role, may bind long-chain fatty acids, such as palmitate, and may play a role in lipid transport or fatty acid metabolism. The sequence is that of DegV domain-containing protein SpyM3_1149 from Streptococcus pyogenes serotype M3 (strain ATCC BAA-595 / MGAS315).